We begin with the raw amino-acid sequence, 134 residues long: Methylglyoxal synthase (134 aa).

The MGS-like domain occupies methionine 1–glutamate 134. Substrate contacts are provided by residues histidine 8, lysine 12, threonine 34–threonine 37, and serine 54–glycine 55. Aspartate 60 acts as the Proton donor/acceptor in catalysis. Histidine 87 contacts substrate.

The protein belongs to the methylglyoxal synthase family.

It carries out the reaction dihydroxyacetone phosphate = methylglyoxal + phosphate. Its function is as follows. Catalyzes the formation of methylglyoxal from dihydroxyacetone phosphate. This is Methylglyoxal synthase from Listeria innocua serovar 6a (strain ATCC BAA-680 / CLIP 11262).